The chain runs to 357 residues: Probable butyrate kinase (357 aa).

The protein belongs to the acetokinase family.

It localises to the cytoplasm. The enzyme catalyses butanoate + ATP = butanoyl phosphate + ADP. The polypeptide is Probable butyrate kinase (Thermotoga petrophila (strain ATCC BAA-488 / DSM 13995 / JCM 10881 / RKU-1)).